A 621-amino-acid polypeptide reads, in one-letter code: MANVPWAEVCEKFQAALALSRVELHKNPEKEPYKSKYSARALLEEVKALLGPAPEDEDERPEAEDGPGAGDHALGLPAEVVEPEGPVAQRAVRLAVIEFHLGVNHIDTEELSAGEEHLVKCLRLLRRYRLSHDCISLCIQAQNNLGILWSEREEIETAQAYLESSEALYNQYMKEVGSPPLDPTERFLPEEEKLTEQERSKRFEKVYTHNLYYLAQVYQHLEMFEKAAHYCHSTLKRQLEHNAYHPIEWAINAATLSQFYINKLCFMEARHCLSAANVIFGQTGKISATEDTPEAEGEVPELYHQRKGEIARCWIKYCLTLMQNAQLSMQDNIGELDLDKQSELRALRKKELDEEESIRKKAVQFGTGELCDAISAVEEKVSYLRPLDFEEARELFLLGQHYVFEAKEFFQIDGYVTDHIEVVQDHSALFKVLAFFETDMERRCKMHKRRIAMLEPLTVDLNPQYYLLVNRQIQFEIAHAYYDMMDLKVAIADRLRDPDSHIVKKINNLNKSALKYYQLFLDSLRDPNKVFPEHIGEDVLRPAMLAKFRVARLYGKIITADPKKELENLATSLEHYKFIVDYCEKHPEAAQEIEVELELSKEMVSLLPTKMERFRTKMALT.

The interval 51 to 75 (GPAPEDEDERPEAEDGPGAGDHALG) is disordered. Residues 54–65 (PEDEDERPEAED) are compositionally biased toward acidic residues. Phosphoserine is present on Ser178.

This sequence belongs to the KIF-binding protein family. As to quaternary structure, interacts with KIF1B; positively regulates KIF1B microtubule motor activity. Interacts with STMN2. In terms of tissue distribution, highly expressed in heart, brain, ovary, testis, spinal cord and all specific brain regions examined. Moderate expressed at intermediate level in all other adult tissues examined, as well as in fetal liver and brain. Not expressed in blood leukocytes.

It is found in the cytoplasm. It localises to the cytoskeleton. Its function is as follows. Activator of KIF1B plus-end-directed microtubule motor activity. Required for organization of axonal microtubules, and axonal outgrowth and maintenance during peripheral and central nervous system development. This Homo sapiens (Human) protein is KIF-binding protein.